We begin with the raw amino-acid sequence, 311 residues long: MSKILVFGHQNPDSDAIGSSVAFAYLAKEAWGLDTEAVALGTPNEETAYVLDYFGVQAPRVVESAKAEGVETVILTDHNEFQQSISDIKDVTVYGVVDHHRVANFETANPLYMRLEPVGSASSIVYRMFKENGVSVPKELAGLLLSGLISDTLLLKSPTTHASDIPVAKELAEIAGVNLEEYGLEMLKAGTNLSSKTAAELIDIDAKTFELNGEAVRVAQVNTVDINDILARQEEIEVAIQEAIVTEGYSDFVLMITDIVNSNSEILALGSNMAKVEAAFEFTLENNHAFLAGAVSRKKQVVPQLTESYNA.

Residues His9, Asp13, Asp15, Asp77, His99, and Asp151 each coordinate Mn(2+).

It belongs to the PPase class C family. The cofactor is Mn(2+).

Its subcellular location is the cytoplasm. The catalysed reaction is diphosphate + H2O = 2 phosphate + H(+). The protein is Probable manganese-dependent inorganic pyrophosphatase of Streptococcus agalactiae serotype III (strain NEM316).